Consider the following 172-residue polypeptide: Translation initiation factor IF-3 (172 aa).

This sequence belongs to the IF-3 family. Monomer.

It localises to the cytoplasm. In terms of biological role, IF-3 binds to the 30S ribosomal subunit and shifts the equilibrium between 70S ribosomes and their 50S and 30S subunits in favor of the free subunits, thus enhancing the availability of 30S subunits on which protein synthesis initiation begins. This is Translation initiation factor IF-3 from Campylobacter curvus (strain 525.92).